Reading from the N-terminus, the 216-residue chain is ATP-dependent Clp protease proteolytic subunit (216 aa).

Ser101 serves as the catalytic Nucleophile. Residue His126 is part of the active site.

The protein belongs to the peptidase S14 family. As to quaternary structure, component of the chloroplastic Clp protease core complex.

The protein localises to the plastid. Its subcellular location is the chloroplast stroma. It catalyses the reaction Hydrolysis of proteins to small peptides in the presence of ATP and magnesium. alpha-casein is the usual test substrate. In the absence of ATP, only oligopeptides shorter than five residues are hydrolyzed (such as succinyl-Leu-Tyr-|-NHMec, and Leu-Tyr-Leu-|-Tyr-Trp, in which cleavage of the -Tyr-|-Leu- and -Tyr-|-Trp bonds also occurs).. Functionally, cleaves peptides in various proteins in a process that requires ATP hydrolysis. Has a chymotrypsin-like activity. Plays a major role in the degradation of misfolded proteins. This chain is ATP-dependent Clp protease proteolytic subunit, found in Oryza nivara (Indian wild rice).